Consider the following 92-residue polypeptide: Small ribosomal subunit protein bS6 (92 aa).

It belongs to the bacterial ribosomal protein bS6 family.

Binds together with bS18 to 16S ribosomal RNA. The protein is Small ribosomal subunit protein bS6 of Clostridioides difficile (strain 630) (Peptoclostridium difficile).